A 138-amino-acid chain; its full sequence is UPF0201 protein PYRAB09730 (138 aa).

Belongs to the UPF0201 family.

This is UPF0201 protein PYRAB09730 from Pyrococcus abyssi (strain GE5 / Orsay).